Here is a 245-residue protein sequence, read N- to C-terminus: Purine nucleoside phosphorylase (245 aa).

Residue histidine 7 participates in a purine D-ribonucleoside binding. Residues 23–27 (GDPGR), arginine 45, and 88–91 (RAGS) each bind phosphate. 183–184 (ME) provides a ligand contact to a purine D-ribonucleoside. Aspartate 206 functions as the Proton donor in the catalytic mechanism.

It belongs to the PNP/MTAP phosphorylase family. In terms of assembly, homohexamer; trimer of homodimers.

The catalysed reaction is inosine + phosphate = alpha-D-ribose 1-phosphate + hypoxanthine. The enzyme catalyses guanosine + phosphate = alpha-D-ribose 1-phosphate + guanine. It carries out the reaction 2'-deoxyguanosine + phosphate = 2-deoxy-alpha-D-ribose 1-phosphate + guanine. It catalyses the reaction 2'-deoxyinosine + phosphate = 2-deoxy-alpha-D-ribose 1-phosphate + hypoxanthine. The catalysed reaction is S-methyl-5'-thioinosine + phosphate = 5-(methylsulfanyl)-alpha-D-ribose 1-phosphate + hypoxanthine. The protein operates within purine metabolism; purine nucleoside salvage. Inhibited by Immucillin-H and 5'-methylthio-Immucillin-H. Inhibited by 5'-deaza-1'-aza-2c-deoxy-1'-(9-methylene)-Immucilin-G (DADMe-ImmG). Functionally, as part of the purine salvage pathway, catalyzes the phosphorolytic breakdown of the N-glycosidic bond in the beta-(deoxy)ribonucleoside molecules, with the formation of the corresponding free purine bases and pentose-1-phosphate. Preferentially acts on inosine and guanosine, and to a lesser extent on 2'-deoxyguanosine and guanosine. Also catalyzes the phosphorylation of S-methyl-5'-thioinosine (MTI) to hypoxanthine; MTI is produced by adenosine deaminase (ADA)-mediated breakdown of S-methyl-5'-thioadenosine (MTA), a major by-product of polyamine biosynthesis. Generates hypoxanthine from both the purine salvage pathway and from polyamine metabolism which is required for nucleic acids synthesis. Has no activity towards adenosine. The polypeptide is Purine nucleoside phosphorylase (Plasmodium falciparum (isolate 3D7)).